We begin with the raw amino-acid sequence, 247 residues long: Segregation and condensation protein A (247 aa).

Belongs to the ScpA family. In terms of assembly, component of a cohesin-like complex composed of ScpA, ScpB and the Smc homodimer, in which ScpA and ScpB bind to the head domain of Smc. The presence of the three proteins is required for the association of the complex with DNA.

The protein resides in the cytoplasm. In terms of biological role, participates in chromosomal partition during cell division. May act via the formation of a condensin-like complex containing Smc and ScpB that pull DNA away from mid-cell into both cell halves. The polypeptide is Segregation and condensation protein A (Bacillus cereus (strain AH187)).